Here is a 638-residue protein sequence, read N- to C-terminus: LIM domain kinase 2 (638 aa).

2 LIM zinc-binding domains span residues 12-63 (CRGC…CHKD) and 72-124 (CHGC…CGKC). Residues 152-239 (LISMPATTEC…TLQLLIEHDP (88 aa)) enclose the PDZ domain. Position 210 is a phosphothreonine (T210). The segment at 255–304 (PHMQSTGHTLMLSTLDTKENQEGTLRRRSLRRSNSISKSPGPSSPKEPLL) is disordered. Over residues 257–269 (MQSTGHTLMLSTL) the composition is skewed to polar residues. Residues 270–279 (DTKENQEGTL) show a composition bias toward basic and acidic residues. Over residues 286-304 (RSNSISKSPGPSSPKEPLL) the composition is skewed to low complexity. 2 positions are modified to phosphoserine: S293 and S298. The 278-residue stretch at 331 to 608 (LIHGEVLGKG…DSFEALSLFL (278 aa)) folds into the Protein kinase domain. Residues 337-345 (LGKGFFGQA) and K360 each bind ATP. Residue D451 is part of the active site. T505 is modified (phosphothreonine; by ROCK1 and CDC42BP).

This sequence belongs to the protein kinase superfamily. TKL Ser/Thr protein kinase family. In terms of assembly, binds ROCK1 and MARF1. Interacts with NISCH. Post-translationally, phosphorylated on serine and/or threonine residues by ROCK1. Specifically expressed in the testes.

It is found in the cytoplasm. The protein localises to the cytoskeleton. The protein resides in the spindle. Its subcellular location is the microtubule organizing center. It localises to the centrosome. It is found in the nucleus. The protein localises to the perinuclear region. It catalyses the reaction L-seryl-[protein] + ATP = O-phospho-L-seryl-[protein] + ADP + H(+). It carries out the reaction L-threonyl-[protein] + ATP = O-phospho-L-threonyl-[protein] + ADP + H(+). In terms of biological role, serine/threonine-protein kinase that plays an essential role in the regulation of actin filament dynamics. Acts downstream of several Rho family GTPase signal transduction pathways. Involved in astral microtubule organization and mitotic spindle orientation during early stages of mitosis by mediating phosphorylation of TPPP. Displays serine/threonine-specific phosphorylation of myelin basic protein and histone (MBP) in vitro. Suppresses ciliogenesis via multiple pathways; phosphorylation of CFL1, suppression of directional trafficking of ciliary vesicles to the ciliary base, and by facilitating YAP1 nuclear localization where it acts as a transcriptional corepressor of the TEAD4 target genes AURKA and PLK1. This Mus musculus (Mouse) protein is LIM domain kinase 2 (Limk2).